The sequence spans 394 residues: Flavohemoprotein (394 aa).

The 136-residue stretch at 1–136 (MISQQTIDIV…LANVFITREE (136 aa)) folds into the Globin domain. Heme b is bound at residue His85. Catalysis depends on charge relay system residues Tyr95 and Glu135. A reductase region spans residues 147–394 (GGWRGTREFT…YECFGPHKVL (248 aa)). An FAD-binding FR-type domain is found at 150-255 (RGTREFTLIE…AAPAGDFFLD (106 aa)). Residues Tyr188 and 204–207 (RQYS) contribute to the FAD site. Residue 268–273 (GVGLTP) participates in NADP(+) binding. FAD is bound at residue 387-390 (CFGP).

Belongs to the globin family. Two-domain flavohemoproteins subfamily. It in the C-terminal section; belongs to the flavoprotein pyridine nucleotide cytochrome reductase family. Heme b is required as a cofactor. The cofactor is FAD.

It carries out the reaction 2 nitric oxide + NADPH + 2 O2 = 2 nitrate + NADP(+) + H(+). It catalyses the reaction 2 nitric oxide + NADH + 2 O2 = 2 nitrate + NAD(+) + H(+). Is involved in NO detoxification in an aerobic process, termed nitric oxide dioxygenase (NOD) reaction that utilizes O(2) and NAD(P)H to convert NO to nitrate, which protects the bacterium from various noxious nitrogen compounds. Therefore, plays a central role in the inducible response to nitrosative stress. The chain is Flavohemoprotein from Photobacterium profundum (strain SS9).